Reading from the N-terminus, the 361-residue chain is Beta-hexosaminidase (361 aa).

Substrate contacts are provided by residues aspartate 69, arginine 77, arginine 144, and 174-175 (KH). The active-site Proton donor/acceptor is histidine 187. Aspartate 258 acts as the Nucleophile in catalysis.

This sequence belongs to the glycosyl hydrolase 3 family. NagZ subfamily.

It localises to the cytoplasm. It carries out the reaction Hydrolysis of terminal non-reducing N-acetyl-D-hexosamine residues in N-acetyl-beta-D-hexosaminides.. It functions in the pathway cell wall biogenesis; peptidoglycan recycling. Plays a role in peptidoglycan recycling by cleaving the terminal beta-1,4-linked N-acetylglucosamine (GlcNAc) from peptide-linked peptidoglycan fragments, giving rise to free GlcNAc, anhydro-N-acetylmuramic acid and anhydro-N-acetylmuramic acid-linked peptides. This is Beta-hexosaminidase from Neisseria meningitidis serogroup C / serotype 2a (strain ATCC 700532 / DSM 15464 / FAM18).